Reading from the N-terminus, the 157-residue chain is MSKVSGGGPCPRRRDGVDPALRSRARRRALQAVYAWQISGGVAKQVIAHFAHEQAYEVADLVYFEDLVEGVLTHCAELDEKLTPYLDRTIEEVDAIERAVLRLGAYELLYRQDVPYRVVINEAIMTAKRFGSKYGHTYVNGVLDRAALALRKVEVLG.

It belongs to the NusB family.

Involved in transcription antitermination. Required for transcription of ribosomal RNA (rRNA) genes. Binds specifically to the boxA antiterminator sequence of the ribosomal RNA (rrn) operons. The polypeptide is Transcription antitermination protein NusB (Xylella fastidiosa (strain M12)).